The following is a 461-amino-acid chain: Transcription factor phm6 (461 aa).

A DNA-binding region (zn(2)-C6 fungal-type) is located at residues 18 to 50 (CNRCRNHKLKCVVTEAPNGTACCQRCIRAMVPC). 2 disordered regions span residues 55-79 (RERK…PWET) and 256-278 (LQTD…VGAT). Over residues 256-274 (LQTDDSSSTQSESSRSRAS) the composition is skewed to low complexity.

It is found in the nucleus. Functionally, transcription factor that regulates the expression of the gene cluster that mediates the biosynthesis of the trans-fused decalin-containing tetramic acid phomasetin. This is Transcription factor phm6 from Pyrenochaetopsis sp.